Consider the following 345-residue polypeptide: Methylthioribose-1-phosphate isomerase (345 aa).

Residues 44–46 (RGA), Arg87, and Gln194 contribute to the substrate site. The Proton donor role is filled by Asp235. 245-246 (NK) lines the substrate pocket.

The protein belongs to the eIF-2B alpha/beta/delta subunits family. MtnA subfamily.

The enzyme catalyses 5-(methylsulfanyl)-alpha-D-ribose 1-phosphate = 5-(methylsulfanyl)-D-ribulose 1-phosphate. The protein operates within amino-acid biosynthesis; L-methionine biosynthesis via salvage pathway; L-methionine from S-methyl-5-thio-alpha-D-ribose 1-phosphate: step 1/6. Catalyzes the interconversion of methylthioribose-1-phosphate (MTR-1-P) into methylthioribulose-1-phosphate (MTRu-1-P). This Heliobacterium modesticaldum (strain ATCC 51547 / Ice1) protein is Methylthioribose-1-phosphate isomerase.